Here is a 137-residue protein sequence, read N- to C-terminus: Phosphoribosyl-AMP cyclohydrolase (137 aa).

Residue D84 participates in Mg(2+) binding. C85 serves as a coordination point for Zn(2+). Mg(2+) contacts are provided by D86 and D88. Positions 101 and 108 each coordinate Zn(2+).

It belongs to the PRA-CH family. As to quaternary structure, homodimer. The cofactor is Mg(2+). Zn(2+) is required as a cofactor.

It is found in the cytoplasm. The catalysed reaction is 1-(5-phospho-beta-D-ribosyl)-5'-AMP + H2O = 1-(5-phospho-beta-D-ribosyl)-5-[(5-phospho-beta-D-ribosylamino)methylideneamino]imidazole-4-carboxamide. Its pathway is amino-acid biosynthesis; L-histidine biosynthesis; L-histidine from 5-phospho-alpha-D-ribose 1-diphosphate: step 3/9. Catalyzes the hydrolysis of the adenine ring of phosphoribosyl-AMP. This chain is Phosphoribosyl-AMP cyclohydrolase, found in Chlorobium limicola (strain DSM 245 / NBRC 103803 / 6330).